The following is a 129-amino-acid chain: Replication initiation control protein YabA (129 aa).

The segment at 52–71 is disordered; the sequence is LSLTDEATPEPKAETEAEHG. Residues 60–71 show a composition bias toward basic and acidic residues; it reads PEPKAETEAEHG. Zn(2+)-binding residues include histidine 103, cysteine 105, cysteine 119, and cysteine 122.

It belongs to the YabA family. In terms of assembly, homotetramer. Interacts with both DnaA and DnaN, acting as a bridge between these two proteins. Requires Zn(2+) as cofactor.

Its subcellular location is the cytoplasm. The protein resides in the nucleoid. Involved in control of chromosome replication initiation. Inhibits the cooperative binding of DnaA to the oriC region, thus negatively regulating initiation of chromosome replication. Inhibits the ability of DnaA-ATP to form a helix on DNA; does not disassemble preformed DnaA-DNA helices. Decreases the residence time of DnaA on the chromosome at its binding sites (oriC, replication forks and promoter-binding sites). Tethers DnaA to the replication machinery via the DNA polymerase beta sliding clamp subunit (dnaN). Associates with oriC and other DnaA targets on the chromosome in a DnaA-dependent manner. The chain is Replication initiation control protein YabA from Listeria monocytogenes serotype 4a (strain HCC23).